The following is a 217-amino-acid chain: UPF0319 protein HSM_0266 (217 aa).

Residues 1-21 form the signal peptide; sequence MKFSFAALASAMLLTSTAAFA.

This sequence belongs to the UPF0319 family.

The polypeptide is UPF0319 protein HSM_0266 (Histophilus somni (strain 2336) (Haemophilus somnus)).